Here is a 467-residue protein sequence, read N- to C-terminus: Protein PHOSPHATE STARVATION RESPONSE 3 (467 aa).

Residues 227–266 (MSLPVSSCSDQEDLQDARSPAKVQLSSSRSSSGTASCNKP) are disordered. An HTH myb-type domain is found at 262–322 (SCNKPRLRWT…HLQKYRLAKY (61 aa)). Residues 293–318 (PKGVLKLMKVEGLTIYHIKSHLQKYR) constitute a DNA-binding region (H-T-H motif). Basic and acidic residues predominate over residues 327-337 (KEDKKQEEKKT). Disordered stretches follow at residues 327 to 353 (KEDKKQEEKKTKSVANGNDHAKKKSAQ) and 400 to 467 (RESI…VHDE). Positions 402–412 (SISSMTSTTEG) are enriched in polar residues. 2 stretches are compositionally biased toward basic and acidic residues: residues 419–428 (PMEKTEDKAE) and 438–467 (RITDTDAECHSKVDNKKTKPQADLEMVHDE).

Expressed in the root cap and in the exodermis of the root, in the root tip of lateral roots, in the mesophyll cells of the leaf, in pollen, vascular cylinder of the anther and the veins of the lemma, palea and pistils, and in the xylem and phloem regions of large vascular bundles, small vascular bundles and diffuse vascular bundles in node I.

The protein resides in the nucleus. Functionally, transcription factor involved in phosphate starvation signaling. Binds to P1BS, an imperfect palindromic sequence 5'-GNATATNC-3', to promote the expression of inorganic phosphate (Pi) starvation-responsive genes. Functionally redundant with PHR1 and PHR2 in regulating Pi starvation response and Pi homeostasis. The protein is Protein PHOSPHATE STARVATION RESPONSE 3 of Oryza sativa subsp. japonica (Rice).